Consider the following 328-residue polypeptide: CCAAT/enhancer-binding protein beta (328 aa).

The residue at position 3 (arginine 3) is an Asymmetric dimethylarginine; by CARM1. Lysine 39 carries the post-translational modification N6-methylated lysine. The segment at 165 to 274 is disordered; the sequence is DSCKGPRKEE…NIAVRKSRDK (110 aa). Low complexity predominate over residues 200-231; that stretch reads SVPSGSSGNLSTSSSSSPPGTPNPSESSKSAA. Residue threonine 220 is modified to Phosphothreonine; by RPS6KA1, CDK2 and MAPK. Residues 248-264 are compositionally biased toward basic and acidic residues; sequence KCVDKHSDEYKLRRERN. A bZIP domain is found at 254-317; the sequence is SDEYKLRRER…STLRNLFKQL (64 aa). The interval 258–278 is basic motif; the sequence is KLRRERNNIAVRKSRDKAKMR. The leucine-zipper stretch occupies residues 280–287; sequence LETQHKVL.

Belongs to the bZIP family. C/EBP subfamily. As to quaternary structure, binds DNA as a dimer. Interacts (not methylated) with MED23, MED26, SMARCA2, SMARCB1 and SMARCC1. Post-translationally, methylated. Methylation at Arg-3 by CARM1 and at Lys-39 by EHMT2, inhibit transactivation activity. Methylation is probably inhibited by phosphorylation at Thr-220. In terms of tissue distribution, specifically expressed in myelomoncytic cells.

It localises to the nucleus. Functionally, important transcriptional activator regulating the expression of genes involved in immune and inflammatory responses. Binds to regulatory regions of several acute-phase and cytokines genes and probably plays a role in the regulation of acute-phase reaction, inflammation and hemopoiesis. The consensus recognition site is 5'-T[TG]NNGNAA[TG]-3'. Functions in brown adipose tissue (BAT) differentiation. Regulates the transcriptional induction of peroxisome proliferator-activated receptor gamma (PPARG). Binds to the MGF and MIM-1 promoters and activates the transcription of these genes. Important transcription factor regulating the expression of genes involved in immune and inflammatory responses. Also plays a significant role in adipogenesis, as well as in the gluconeogenic pathway, liver regeneration, and hematopoiesis. The consensus recognition site is 5'-T[TG]NNGNAA[TG]-3'. Its functional capacity is governed by protein interactions and post-translational protein modifications. The polypeptide is CCAAT/enhancer-binding protein beta (CEBPB) (Gallus gallus (Chicken)).